Here is a 255-residue protein sequence, read N- to C-terminus: Acetyl-coenzyme A carboxylase carboxyl transferase subunit alpha (255 aa).

The 235-residue stretch at 1–235 folds into the CoA carboxyltransferase C-terminal domain; sequence MNIAKIVREA…KKELQTELAR (235 aa).

The protein belongs to the AccA family. Acetyl-CoA carboxylase is a heterohexamer composed of biotin carboxyl carrier protein (AccB), biotin carboxylase (AccC) and two subunits each of ACCase subunit alpha (AccA) and ACCase subunit beta (AccD).

Its subcellular location is the cytoplasm. The catalysed reaction is N(6)-carboxybiotinyl-L-lysyl-[protein] + acetyl-CoA = N(6)-biotinyl-L-lysyl-[protein] + malonyl-CoA. The protein operates within lipid metabolism; malonyl-CoA biosynthesis; malonyl-CoA from acetyl-CoA: step 1/1. Component of the acetyl coenzyme A carboxylase (ACC) complex. First, biotin carboxylase catalyzes the carboxylation of biotin on its carrier protein (BCCP) and then the CO(2) group is transferred by the carboxyltransferase to acetyl-CoA to form malonyl-CoA. The polypeptide is Acetyl-coenzyme A carboxylase carboxyl transferase subunit alpha (Streptococcus pneumoniae serotype 19F (strain G54)).